Here is a 197-residue protein sequence, read N- to C-terminus: Putative manganese efflux pump MntP (197 aa).

A run of 6 helical transmembrane segments spans residues Val-8 to Ala-28, Val-43 to Leu-63, Val-66 to Leu-86, Leu-123 to Leu-143, Trp-146 to Leu-166, and Lys-177 to Ser-197.

The protein belongs to the MntP (TC 9.B.29) family.

It is found in the cell inner membrane. Functionally, probably functions as a manganese efflux pump. The chain is Putative manganese efflux pump MntP from Psychrobacter arcticus (strain DSM 17307 / VKM B-2377 / 273-4).